Here is a 381-residue protein sequence, read N- to C-terminus: Alkanesulfonate monooxygenase (381 aa).

It belongs to the SsuD family. In terms of assembly, homotetramer.

The enzyme catalyses an alkanesulfonate + FMNH2 + O2 = an aldehyde + FMN + sulfite + H2O + 2 H(+). Its function is as follows. Catalyzes the desulfonation of aliphatic sulfonates. This chain is Alkanesulfonate monooxygenase, found in Escherichia coli O6:H1 (strain CFT073 / ATCC 700928 / UPEC).